Consider the following 282-residue polypeptide: Bis(5'-nucleosyl)-tetraphosphatase, symmetrical (282 aa).

The protein belongs to the Ap4A hydrolase family.

The enzyme catalyses P(1),P(4)-bis(5'-adenosyl) tetraphosphate + H2O = 2 ADP + 2 H(+). Hydrolyzes diadenosine 5',5'''-P1,P4-tetraphosphate to yield ADP. This Burkholderia thailandensis (strain ATCC 700388 / DSM 13276 / CCUG 48851 / CIP 106301 / E264) protein is Bis(5'-nucleosyl)-tetraphosphatase, symmetrical.